Here is a 568-residue protein sequence, read N- to C-terminus: Potassium-transporting ATPase potassium-binding subunit (568 aa).

The next 12 membrane-spanning stretches (helical) occupy residues 7–27 (ITIGIFFLCVLALTRPLGGFL), 65–85 (HYALALLSFKIVCFVAVYAIL), 136–156 (GLTVQNFVSAAAGIAVAAAII), 179–199 (LYVLLPISVVLSLFYVFEGIP), 254–274 (LTNFVEMISIFAIGAGLTNVF), 285–305 (WAVFSAMSVLFFVGVTAVYWA), 332–352 (FGVAASALFAAVTTDASCGAV), 354–374 (AMHESFLPLGGMVPLINMMLG), 377–397 (IIGGVGAGLYGFILFAIIAVF), 423–443 (MLAVLCLPLVMLGFTAVAVVV), 487–507 (ITLGIGMMIGRFFVIVPALAI), and 530–550 (LFIGLVAGVIIIVGGLTFLPA).

This sequence belongs to the KdpA family. As to quaternary structure, the system is composed of three essential subunits: KdpA, KdpB and KdpC.

The protein localises to the cell inner membrane. Its function is as follows. Part of the high-affinity ATP-driven potassium transport (or Kdp) system, which catalyzes the hydrolysis of ATP coupled with the electrogenic transport of potassium into the cytoplasm. This subunit binds the periplasmic potassium ions and delivers the ions to the membrane domain of KdpB through an intramembrane tunnel. The sequence is that of Potassium-transporting ATPase potassium-binding subunit from Granulibacter bethesdensis (strain ATCC BAA-1260 / CGDNIH1).